A 367-amino-acid chain; its full sequence is Chorismate synthase (367 aa).

Arg48 is an NADP(+) binding site. Residues 125-127 (RSS), 243-244 (NA), Gly283, 298-302 (KPTSS), and Arg324 each bind FMN.

The protein belongs to the chorismate synthase family. In terms of assembly, homotetramer. It depends on FMNH2 as a cofactor.

It carries out the reaction 5-O-(1-carboxyvinyl)-3-phosphoshikimate = chorismate + phosphate. The protein operates within metabolic intermediate biosynthesis; chorismate biosynthesis; chorismate from D-erythrose 4-phosphate and phosphoenolpyruvate: step 7/7. Functionally, catalyzes the anti-1,4-elimination of the C-3 phosphate and the C-6 proR hydrogen from 5-enolpyruvylshikimate-3-phosphate (EPSP) to yield chorismate, which is the branch point compound that serves as the starting substrate for the three terminal pathways of aromatic amino acid biosynthesis. This reaction introduces a second double bond into the aromatic ring system. This Psychrobacter sp. (strain PRwf-1) protein is Chorismate synthase.